A 485-amino-acid polypeptide reads, in one-letter code: Ribulose bisphosphate carboxylase large chain (485 aa).

Residues Asn124 and Thr174 each contribute to the substrate site. Lys176 (proton acceptor) is an active-site residue. Residue Lys178 participates in substrate binding. The Mg(2+) site is built by Lys202, Asp204, and Glu205. N6-carboxylysine is present on Lys202. Residue His294 is the Proton acceptor of the active site. The substrate site is built by Arg295, His327, and Ser379.

Belongs to the RuBisCO large chain family. Type I subfamily. As to quaternary structure, heterohexadecamer of 8 large chains and 8 small chains. The cofactor is Mg(2+).

The catalysed reaction is 2 (2R)-3-phosphoglycerate + 2 H(+) = D-ribulose 1,5-bisphosphate + CO2 + H2O. It carries out the reaction D-ribulose 1,5-bisphosphate + O2 = 2-phosphoglycolate + (2R)-3-phosphoglycerate + 2 H(+). Its function is as follows. RuBisCO catalyzes two reactions: the carboxylation of D-ribulose 1,5-bisphosphate, the primary event in carbon dioxide fixation, as well as the oxidative fragmentation of the pentose substrate. Both reactions occur simultaneously and in competition at the same active site. This Rhodopseudomonas palustris (strain BisA53) protein is Ribulose bisphosphate carboxylase large chain.